The chain runs to 500 residues: Protein-cysteine N-palmitoyltransferase Rasp (500 aa).

10 helical membrane passes run 15–35 (IFVY…KIYG), 73–93 (GDFI…QGFI), 105–125 (FIGV…MVLL), 134–154 (IVSL…WILC), 206–226 (SLVQ…GPII), 243–263 (LGFV…QCAL), 293–313 (FMGQ…IAFA), 372–392 (LTFA…IWSI), 429–449 (LYAM…VYFI), and 461–481 (GAYL…YCFF). His-381 is an active-site residue.

This sequence belongs to the membrane-bound acyltransferase family. HHAT subfamily.

The protein resides in the membrane. The enzyme catalyses N-terminal L-cysteinyl-[protein] + hexadecanoyl-CoA = N-terminal N-hexadecanoyl-L-cysteinyl-[protein] + CoA + H(+). It catalyses the reaction N-terminal L-cysteinyl-[protein]-C-terminal glycyl cholesterol ester + hexadecanoyl-CoA = N-terminal N-hexadecanoyl-L-cysteinyl-[protein]-C-terminal glycyl cholesterol ester + CoA + H(+). Functionally, required in hedgehog (hh) expressing cells for production of appropriate signaling activity in embryos and in the imaginal precursors of adult tissues. Acts within the secretory pathway to catalyze N-terminal palmitoylation of Hh; this lipid modification is required for the embryonic and larval patterning activities of the Hh signal. Not required for Wg signaling. This is Protein-cysteine N-palmitoyltransferase Rasp (rasp) from Drosophila melanogaster (Fruit fly).